The sequence spans 157 residues: MPSVESFELDHNAVKAPYVRHCGVHKVGTDGVVNKFDIRFCQPNKQAMKPDTIHTLEHLLAFTIRTYAEKYDHFDIIDISPMGCQTGYYLVVSGEPKVEEIVDLLEDTFKEAVEVTEIPAANEKQCGQAKLHDLEGAKRMMRFWLSQNKEDLLKVFG.

His54, His58, and Cys126 together coordinate Fe cation.

Belongs to the LuxS family. As to quaternary structure, homodimer. Requires Fe cation as cofactor.

It carries out the reaction S-(5-deoxy-D-ribos-5-yl)-L-homocysteine = (S)-4,5-dihydroxypentane-2,3-dione + L-homocysteine. Involved in the synthesis of autoinducer 2 (AI-2) which is secreted by bacteria and is used to communicate both the cell density and the metabolic potential of the environment. The regulation of gene expression in response to changes in cell density is called quorum sensing. Catalyzes the transformation of S-ribosylhomocysteine (RHC) to homocysteine (HC) and 4,5-dihydroxy-2,3-pentadione (DPD). The protein is S-ribosylhomocysteine lyase of Bacillus licheniformis (strain ATCC 14580 / DSM 13 / JCM 2505 / CCUG 7422 / NBRC 12200 / NCIMB 9375 / NCTC 10341 / NRRL NRS-1264 / Gibson 46).